Consider the following 475-residue polypeptide: Ribulose bisphosphate carboxylase large chain (475 aa).

Positions 1 to 2 are excised as a propeptide; sequence MS. P3 carries the N-acetylproline modification. Residue K14 is modified to N6,N6,N6-trimethyllysine. Positions 123 and 173 each coordinate substrate. Catalysis depends on K175, which acts as the Proton acceptor. K177 contacts substrate. 3 residues coordinate Mg(2+): K201, D203, and E204. K201 carries the post-translational modification N6-carboxylysine. The active-site Proton acceptor is H294. Substrate-binding residues include R295, H327, and S379.

Belongs to the RuBisCO large chain family. Type I subfamily. As to quaternary structure, heterohexadecamer of 8 large chains and 8 small chains; disulfide-linked. The disulfide link is formed within the large subunit homodimers. It depends on Mg(2+) as a cofactor. Post-translationally, the disulfide bond which can form in the large chain dimeric partners within the hexadecamer appears to be associated with oxidative stress and protein turnover.

The protein localises to the plastid. It localises to the chloroplast. It carries out the reaction 2 (2R)-3-phosphoglycerate + 2 H(+) = D-ribulose 1,5-bisphosphate + CO2 + H2O. It catalyses the reaction D-ribulose 1,5-bisphosphate + O2 = 2-phosphoglycolate + (2R)-3-phosphoglycerate + 2 H(+). Functionally, ruBisCO catalyzes two reactions: the carboxylation of D-ribulose 1,5-bisphosphate, the primary event in carbon dioxide fixation, as well as the oxidative fragmentation of the pentose substrate in the photorespiration process. Both reactions occur simultaneously and in competition at the same active site. This chain is Ribulose bisphosphate carboxylase large chain, found in Plumbago auriculata (Cape leadwort).